The chain runs to 428 residues: Leucine-rich repeat-containing protein 42 (428 aa).

LRR repeat units follow at residues 149-170, 174-195, 202-222, 234-255, and 259-280; these read VLCS…EEIK, ELTC…LEHL, SVTQ…RKMT, NLSL…GYLF, and KLNC…KHKL. The segment at 379-412 is disordered; it reads KHEALSSQESKKSKKRAFEEPEKEQGSSSQTSKQ. Over residues 394-403 the composition is skewed to basic and acidic residues; it reads RAFEEPEKEQ. A phosphoserine mark is found at Ser-406 and Ser-407.

The protein belongs to the LRRC42 family.

The protein is Leucine-rich repeat-containing protein 42 (LRRC42) of Bos taurus (Bovine).